Reading from the N-terminus, the 172-residue chain is Ribosome maturation factor RimP (172 aa).

This sequence belongs to the RimP family.

It localises to the cytoplasm. Its function is as follows. Required for maturation of 30S ribosomal subunits. The protein is Ribosome maturation factor RimP of Chlorobium phaeovibrioides (strain DSM 265 / 1930) (Prosthecochloris vibrioformis (strain DSM 265)).